We begin with the raw amino-acid sequence, 148 residues long: Arginine repressor (148 aa).

This sequence belongs to the ArgR family.

It localises to the cytoplasm. It participates in amino-acid biosynthesis; L-arginine biosynthesis [regulation]. In terms of biological role, regulates arginine biosynthesis genes. This Streptococcus pneumoniae serotype 4 (strain ATCC BAA-334 / TIGR4) protein is Arginine repressor (argR).